The primary structure comprises 161 residues: ATP synthase subunit b 1 (161 aa).

The chain crosses the membrane as a helical span at residues 6–26; it reads EFYVALGFVIFVAILLYYGVH.

This sequence belongs to the ATPase B chain family. F-type ATPases have 2 components, F(1) - the catalytic core - and F(0) - the membrane proton channel. F(1) has five subunits: alpha(3), beta(3), gamma(1), delta(1), epsilon(1). F(0) has three main subunits: a(1), b(2) and c(10-14). The alpha and beta chains form an alternating ring which encloses part of the gamma chain. F(1) is attached to F(0) by a central stalk formed by the gamma and epsilon chains, while a peripheral stalk is formed by the delta and b chains.

The protein localises to the cell inner membrane. Its function is as follows. F(1)F(0) ATP synthase produces ATP from ADP in the presence of a proton or sodium gradient. F-type ATPases consist of two structural domains, F(1) containing the extramembraneous catalytic core and F(0) containing the membrane proton channel, linked together by a central stalk and a peripheral stalk. During catalysis, ATP synthesis in the catalytic domain of F(1) is coupled via a rotary mechanism of the central stalk subunits to proton translocation. Functionally, component of the F(0) channel, it forms part of the peripheral stalk, linking F(1) to F(0). This chain is ATP synthase subunit b 1, found in Beijerinckia indica subsp. indica (strain ATCC 9039 / DSM 1715 / NCIMB 8712).